The following is a 294-amino-acid chain: Protoheme IX farnesyltransferase (294 aa).

9 helical membrane-spanning segments follow: residues 22 to 42, 46 to 66, 89 to 109, 116 to 136, 143 to 163, 170 to 190, 211 to 231, 232 to 252, and 272 to 292; these read VTQLAVFCAVIGMFLATPDLP, IVIAATIGIWLLAGAAFAINC, ITVPQTLVFSGVIGGAGMWVL, LTMWLTFATFVGYAVIYTIIL, NIVIGGLSGAMPPALGWAAVA, AWILVLIIFIWTPPHFWALAL, AFTQFHIWLYTIALVATTMLP, FAVGMSGLIYLVVAAVLDVIF, and FTYSIIYLSLLFAALLVDHYL.

Belongs to the UbiA prenyltransferase family. Protoheme IX farnesyltransferase subfamily.

It is found in the cell inner membrane. The enzyme catalyses heme b + (2E,6E)-farnesyl diphosphate + H2O = Fe(II)-heme o + diphosphate. It participates in porphyrin-containing compound metabolism; heme O biosynthesis; heme O from protoheme: step 1/1. Converts heme B (protoheme IX) to heme O by substitution of the vinyl group on carbon 2 of heme B porphyrin ring with a hydroxyethyl farnesyl side group. The chain is Protoheme IX farnesyltransferase from Herminiimonas arsenicoxydans.